We begin with the raw amino-acid sequence, 98 residues long: Post-transcriptional regulator ComN (98 aa).

In terms of assembly, interacts directly with DivIVA.

Its subcellular location is the cytoplasm. In terms of biological role, required for post-transcription initiation control of the comE operon. Promotes the accumulation of its target comE mRNA to septal and polar sites. The polypeptide is Post-transcriptional regulator ComN (comN) (Bacillus subtilis (strain 168)).